Consider the following 313-residue polypeptide: Beta-ribofuranosylphenol 5'-phosphate synthase (313 aa).

Belongs to the beta-RFA-P synthase family. Homodimer.

The catalysed reaction is 5-phospho-alpha-D-ribose 1-diphosphate + 4-hydroxybenzoate + H(+) = 4-(beta-D-ribofuranosyl)phenol 5'-phosphate + CO2 + diphosphate. It catalyses the reaction 4-aminobenzoate + 5-phospho-alpha-D-ribose 1-diphosphate + H(+) = 4-(beta-D-ribofuranosyl)aminobenzene 5'-phosphate + CO2 + diphosphate. It functions in the pathway cofactor biosynthesis; 5,6,7,8-tetrahydromethanopterin biosynthesis. Its function is as follows. Catalyzes the condensation of 4-hydroxybenzoate (HB) with 5-phospho-alpha-D-ribose 1-diphosphate (PRPP) to produce beta-ribofuranosylphenol 5'-phosphate (beta-RFH-P). Also catalyzes the condensation of 4-aminobenzoate (pABA) with PRPP to produce beta-ribofuranosylaminobenzene 5'-phosphate (beta-RFA-P). The polypeptide is Beta-ribofuranosylphenol 5'-phosphate synthase (Archaeoglobus fulgidus (strain ATCC 49558 / DSM 4304 / JCM 9628 / NBRC 100126 / VC-16)).